Consider the following 260-residue polypeptide: Transcription factor BEE 1 (260 aa).

The tract at residues 118-139 (ETGSLRRGKRLKKKKEEEDEKE) is disordered. A bHLH domain is found at 151–201 (QATDSHSLAERVRRGKINERLRCLQDMVPGCYKAMGMATMLDEIINYVQSL).

It is found in the nucleus. Functionally, positive regulator of brassinosteroid signaling. The polypeptide is Transcription factor BEE 1 (BEE1) (Arabidopsis thaliana (Mouse-ear cress)).